Here is a 214-residue protein sequence, read N- to C-terminus: Probable transaldolase (214 aa).

The Schiff-base intermediate with substrate role is filled by Lys-83.

This sequence belongs to the transaldolase family. Type 3B subfamily.

It is found in the cytoplasm. The catalysed reaction is D-sedoheptulose 7-phosphate + D-glyceraldehyde 3-phosphate = D-erythrose 4-phosphate + beta-D-fructose 6-phosphate. The protein operates within carbohydrate degradation; pentose phosphate pathway; D-glyceraldehyde 3-phosphate and beta-D-fructose 6-phosphate from D-ribose 5-phosphate and D-xylulose 5-phosphate (non-oxidative stage): step 2/3. Transaldolase is important for the balance of metabolites in the pentose-phosphate pathway. The sequence is that of Probable transaldolase from Streptococcus equi subsp. equi (strain 4047).